The chain runs to 365 residues: Flagellar P-ring protein (365 aa).

The N-terminal stretch at 1 to 21 (MKSLRLVALFCCLLPLGMAHA) is a signal peptide.

The protein belongs to the FlgI family. As to quaternary structure, the basal body constitutes a major portion of the flagellar organelle and consists of four rings (L,P,S, and M) mounted on a central rod.

Its subcellular location is the periplasm. The protein localises to the bacterial flagellum basal body. Assembles around the rod to form the L-ring and probably protects the motor/basal body from shearing forces during rotation. The polypeptide is Flagellar P-ring protein (Aeromonas hydrophila subsp. hydrophila (strain ATCC 7966 / DSM 30187 / BCRC 13018 / CCUG 14551 / JCM 1027 / KCTC 2358 / NCIMB 9240 / NCTC 8049)).